The primary structure comprises 347 residues: Probable dual-specificity RNA methyltransferase RlmN (347 aa).

The active-site Proton acceptor is the glutamate 91. One can recognise a Radical SAM core domain in the interval 97 to 327; that stretch reads YKYGNSICVS…ATVRREMGSD (231 aa). Residues cysteine 104 and cysteine 332 are joined by a disulfide bond. Residues cysteine 111, cysteine 115, and cysteine 118 each contribute to the [4Fe-4S] cluster site. S-adenosyl-L-methionine is bound by residues 158–159, serine 190, 213–215, and asparagine 289; these read GE and SLH. Cysteine 332 (S-methylcysteine intermediate) is an active-site residue.

This sequence belongs to the radical SAM superfamily. RlmN family. [4Fe-4S] cluster serves as cofactor.

Its subcellular location is the cytoplasm. The catalysed reaction is adenosine(2503) in 23S rRNA + 2 reduced [2Fe-2S]-[ferredoxin] + 2 S-adenosyl-L-methionine = 2-methyladenosine(2503) in 23S rRNA + 5'-deoxyadenosine + L-methionine + 2 oxidized [2Fe-2S]-[ferredoxin] + S-adenosyl-L-homocysteine. The enzyme catalyses adenosine(37) in tRNA + 2 reduced [2Fe-2S]-[ferredoxin] + 2 S-adenosyl-L-methionine = 2-methyladenosine(37) in tRNA + 5'-deoxyadenosine + L-methionine + 2 oxidized [2Fe-2S]-[ferredoxin] + S-adenosyl-L-homocysteine. Its function is as follows. Specifically methylates position 2 of adenine 2503 in 23S rRNA and position 2 of adenine 37 in tRNAs. The protein is Probable dual-specificity RNA methyltransferase RlmN of Clostridium perfringens (strain SM101 / Type A).